A 558-amino-acid chain; its full sequence is Potassium-transporting ATPase potassium-binding subunit (558 aa).

A run of 11 helical transmembrane segments spans residues 1 to 21 (MDTLAGILQVASVVLVLVLVH), 58 to 78 (WPAYLRAVLAFSLVGVLVVYG), 85 to 105 (FLPYALGLPAVPEGISFNTAV), 130 to 150 (GLAVQNFVSAAVGIAVAIALV), 179 to 199 (LSLVTAVVLIAGGVIQNFAGF), 245 to 265 (PTAWTSAFQVLLMLVIPFSLP), 279 to 299 (TAIAAVMATIAVASLTALTLF), 374 to 394 (GLYGMLVLAVIAVFVAGLLVG), 416 to 436 (ILVTPILVLVGTALSFAIPAV), 484 to 504 (ALGVAMLLGRFVPIVLVLALA), and 527 to 547 (FVGLLIGVTVIVTALTYFPVL).

It belongs to the KdpA family. The system is composed of three essential subunits: KdpA, KdpB and KdpC.

Its subcellular location is the cell membrane. In terms of biological role, part of the high-affinity ATP-driven potassium transport (or Kdp) system, which catalyzes the hydrolysis of ATP coupled with the electrogenic transport of potassium into the cytoplasm. This subunit binds the extracellular potassium ions and delivers the ions to the membrane domain of KdpB through an intramembrane tunnel. This Clavibacter sepedonicus (Clavibacter michiganensis subsp. sepedonicus) protein is Potassium-transporting ATPase potassium-binding subunit.